The sequence spans 102 residues: Protein C4 (102 aa).

Positions 1-27 are enriched in low complexity; it reads MRMGSLISTCLSSSKASSSARINDSST. 2 disordered regions span residues 1 to 35 and 47 to 86; these read MRMG…PGQH and RQTS…LTPR.

This sequence belongs to the geminiviridae protein AC4/C4 family.

Functionally, pathogenicity determinant. May act as a suppressor of RNA-mediated gene silencing, also known as post-transcriptional gene silencing (PTGS), a mechanism of plant viral defense that limits the accumulation of viral RNAs. This Cynanchum acutum (Little mallow) protein is Protein C4.